The primary structure comprises 445 residues: tRNA-2-methylthio-N(6)-dimethylallyladenosine synthase (445 aa).

Residues K3–R124 enclose the MTTase N-terminal domain. [4Fe-4S] cluster is bound by residues C12, C48, C87, C162, C166, and C169. The Radical SAM core domain occupies Y148–A380. The TRAM domain occupies T383–L445.

Belongs to the methylthiotransferase family. MiaB subfamily. Monomer. [4Fe-4S] cluster is required as a cofactor.

The protein resides in the cytoplasm. It carries out the reaction N(6)-dimethylallyladenosine(37) in tRNA + (sulfur carrier)-SH + AH2 + 2 S-adenosyl-L-methionine = 2-methylsulfanyl-N(6)-dimethylallyladenosine(37) in tRNA + (sulfur carrier)-H + 5'-deoxyadenosine + L-methionine + A + S-adenosyl-L-homocysteine + 2 H(+). In terms of biological role, catalyzes the methylthiolation of N6-(dimethylallyl)adenosine (i(6)A), leading to the formation of 2-methylthio-N6-(dimethylallyl)adenosine (ms(2)i(6)A) at position 37 in tRNAs that read codons beginning with uridine. This chain is tRNA-2-methylthio-N(6)-dimethylallyladenosine synthase, found in Rickettsia rickettsii (strain Iowa).